Consider the following 136-residue polypeptide: Nucleoside diphosphate kinase (136 aa).

Positions 10, 58, 86, 92, 104, and 114 each coordinate ATP. His117 acts as the Pros-phosphohistidine intermediate in catalysis.

It belongs to the NDK family. As to quaternary structure, homotetramer. Mg(2+) is required as a cofactor.

The protein resides in the cytoplasm. It carries out the reaction a 2'-deoxyribonucleoside 5'-diphosphate + ATP = a 2'-deoxyribonucleoside 5'-triphosphate + ADP. The enzyme catalyses a ribonucleoside 5'-diphosphate + ATP = a ribonucleoside 5'-triphosphate + ADP. Major role in the synthesis of nucleoside triphosphates other than ATP. The ATP gamma phosphate is transferred to the NDP beta phosphate via a ping-pong mechanism, using a phosphorylated active-site intermediate. This is Nucleoside diphosphate kinase from Mycolicibacterium paratuberculosis (strain ATCC BAA-968 / K-10) (Mycobacterium paratuberculosis).